Here is a 650-residue protein sequence, read N- to C-terminus: Putative F-box protein R757 (650 aa).

The F-box domain occupies 7-53 (FSVMESLPTELAYHVLSFIDFNSVVTYRLCSQESNNFIKSMLVFFPI).

The polypeptide is Putative F-box protein R757 (Acanthamoeba polyphaga mimivirus (APMV)).